The chain runs to 226 residues: Phosphoenolpyruvate guanylyltransferase (226 aa).

Residues threonine 145, glycine 161, and serine 164 each coordinate phosphoenolpyruvate.

This sequence belongs to the CofC family.

The enzyme catalyses phosphoenolpyruvate + GTP + H(+) = enolpyruvoyl-2-diphospho-5'-guanosine + diphosphate. Its pathway is cofactor biosynthesis; coenzyme F420 biosynthesis. In terms of biological role, guanylyltransferase that catalyzes the activation of phosphoenolpyruvate (PEP) as enolpyruvoyl-2-diphospho-5'-guanosine, via the condensation of PEP with GTP. It is involved in the biosynthesis of coenzyme F420, a hydride carrier cofactor. This Nocardia farcinica (strain IFM 10152) protein is Phosphoenolpyruvate guanylyltransferase.